A 416-amino-acid polypeptide reads, in one-letter code: Glutamyl-tRNA reductase (416 aa).

Residues 49 to 52, Ser-105, 110 to 112, and Gln-116 each bind substrate; these read TCNR and EPQ. Cys-50 (nucleophile) is an active-site residue. 185–190 is an NADP(+) binding site; that stretch reads GAGETI.

It belongs to the glutamyl-tRNA reductase family. Homodimer.

It catalyses the reaction (S)-4-amino-5-oxopentanoate + tRNA(Glu) + NADP(+) = L-glutamyl-tRNA(Glu) + NADPH + H(+). The protein operates within porphyrin-containing compound metabolism; protoporphyrin-IX biosynthesis; 5-aminolevulinate from L-glutamyl-tRNA(Glu): step 1/2. Its function is as follows. Catalyzes the NADPH-dependent reduction of glutamyl-tRNA(Glu) to glutamate 1-semialdehyde (GSA). The chain is Glutamyl-tRNA reductase from Shewanella sediminis (strain HAW-EB3).